The following is a 956-amino-acid chain: Translation initiation factor IF-2 (956 aa).

The segment at 68 to 357 is disordered; sequence APEAAAPKAP…GVSVPRGDGN (290 aa). 4 stretches are compositionally biased toward low complexity: residues 86–123, 141–156, 164–175, and 212–235; these read AKPA…APAV, PGNN…PRAG, PAAAPASGAGRP, and GPRP…RPAA. Composition is skewed to gly residues over residues 236 to 257 and 276 to 324; these read GSGG…GGGN and RGAG…GAGR. A compositionally biased stretch (basic residues) spans 325–334; that stretch reads GKQRKSKRAK. In terms of domain architecture, tr-type G spans 449-620; it reads ARPPVVTVMG…AVMLTADAAL (172 aa). Residues 458-465 form a G1 region; the sequence is GHVDHGKT. Residue 458-465 participates in GTP binding; that stretch reads GHVDHGKT. The tract at residues 483 to 487 is G2; the sequence is GITQH. Residues 508–511 form a G3 region; it reads DTPG. Residues 508–512 and 562–565 contribute to the GTP site; these read DTPGH and NKID. Residues 562 to 565 form a G4 region; sequence NKID. The segment at 598–600 is G5; it reads SAR.

The protein belongs to the TRAFAC class translation factor GTPase superfamily. Classic translation factor GTPase family. IF-2 subfamily.

It is found in the cytoplasm. In terms of biological role, one of the essential components for the initiation of protein synthesis. Protects formylmethionyl-tRNA from spontaneous hydrolysis and promotes its binding to the 30S ribosomal subunits. Also involved in the hydrolysis of GTP during the formation of the 70S ribosomal complex. The sequence is that of Translation initiation factor IF-2 from Renibacterium salmoninarum (strain ATCC 33209 / DSM 20767 / JCM 11484 / NBRC 15589 / NCIMB 2235).